The sequence spans 606 residues: Glucose methanol choline oxidoreductase atC (606 aa).

A signal peptide spans 1-19; the sequence is MRVFPTYIAVSGLFGGAFA. N-linked (GlcNAc...) asparagine glycans are attached at residues asparagine 43, asparagine 69, asparagine 87, asparagine 290, asparagine 368, asparagine 418, asparagine 421, and asparagine 552.

This sequence belongs to the GMC oxidoreductase family.

The enzyme catalyses terremutin + A = terreate + AH2. The protein operates within secondary metabolite biosynthesis. In terms of biological role, glucose methanol choline oxidoreductase; part of the gene cluster that mediates the biosynthesis of terreic acid, a quinone epoxide inhibitor of Bruton's tyrosine kinase. The first step of the pathway is the synthesis of 6-methylsalicylic acid (6-MSA) by the 6-methylsalicylic acid synthase atX. In the biosynthesis of 6-MSA, atX utilizes one acetyl-CoA and three malonyl-CoAs as its substrates and catalyzes a series of programmed reactions including Claisen condensation, reduction, aldol cyclization, and the hydrolytic cleavage that yields 6-MSA. The 6-methylsalicylate 1-monooxygenase atA then catalyzes the decarboxylative hydroxylation of 6-MSA to 3-methylcatechol. The next step is the conversion of 3-methylcatechol to 3-methyl-1,2,4-benzenetriol by cytochrome P450 monooxygenase atE, which is enhanced by cytochrome P450 monooxygenase atG. Then, the epoxidase atD catalyzes the epoxidation and hydroxyl oxidation of 3-methyl-1,2,4-benzenetriol to terremutin. Lastly, GMC oxidoreductase atC oxidizes terremutin to terreic acid. The sequence is that of Glucose methanol choline oxidoreductase atC from Aspergillus terreus (strain NIH 2624 / FGSC A1156).